Here is a 513-residue protein sequence, read N- to C-terminus: 2-isopropylmalate synthase (513 aa).

The region spanning 7 to 269 (VYIFDTTLRD…TTGIVTEELF (263 aa)) is the Pyruvate carboxyltransferase domain. Mn(2+)-binding residues include Asp16, His204, His206, and Asn240. The tract at residues 393-513 (ALQFLSVHCG…KEEERTCPQL (121 aa)) is regulatory domain.

This sequence belongs to the alpha-IPM synthase/homocitrate synthase family. LeuA type 1 subfamily. As to quaternary structure, homodimer. Mn(2+) serves as cofactor.

It is found in the cytoplasm. The enzyme catalyses 3-methyl-2-oxobutanoate + acetyl-CoA + H2O = (2S)-2-isopropylmalate + CoA + H(+). The protein operates within amino-acid biosynthesis; L-leucine biosynthesis; L-leucine from 3-methyl-2-oxobutanoate: step 1/4. Its function is as follows. Catalyzes the condensation of the acetyl group of acetyl-CoA with 3-methyl-2-oxobutanoate (2-ketoisovalerate) to form 3-carboxy-3-hydroxy-4-methylpentanoate (2-isopropylmalate). This chain is 2-isopropylmalate synthase, found in Solidesulfovibrio magneticus (strain ATCC 700980 / DSM 13731 / RS-1) (Desulfovibrio magneticus).